A 428-amino-acid polypeptide reads, in one-letter code: Enolase (428 aa).

Q164 contacts (2R)-2-phosphoglycerate. E208 acts as the Proton donor in catalysis. D245, E286, and D313 together coordinate Mg(2+). (2R)-2-phosphoglycerate contacts are provided by K338, R367, S368, and K389. Residue K338 is the Proton acceptor of the active site.

It belongs to the enolase family. Mg(2+) serves as cofactor.

It localises to the cytoplasm. Its subcellular location is the secreted. The protein localises to the cell surface. It carries out the reaction (2R)-2-phosphoglycerate = phosphoenolpyruvate + H2O. Its pathway is carbohydrate degradation; glycolysis; pyruvate from D-glyceraldehyde 3-phosphate: step 4/5. In terms of biological role, catalyzes the reversible conversion of 2-phosphoglycerate (2-PG) into phosphoenolpyruvate (PEP). It is essential for the degradation of carbohydrates via glycolysis. The polypeptide is Enolase (Pyrococcus horikoshii (strain ATCC 700860 / DSM 12428 / JCM 9974 / NBRC 100139 / OT-3)).